Consider the following 663-residue polypeptide: Syntabulin (663 aa).

Disordered stretches follow at residues 1–202 (MGPL…PREK) and 216–267 (VNIH…PEQY). The sufficient for interaction with KIF5B stretch occupies residues 2 to 417 (GPLRESKKEH…DTMADGLSLE (416 aa)). S50 bears the Phosphoserine mark. The span at 57–73 (FNPSSSGRSARTVSSNS) shows a compositional bias: low complexity. Polar residues predominate over residues 81-97 (CPSSQSVSPVKTPSDAG). Position 107 is a phosphoserine (S107). 3 stretches are compositionally biased toward low complexity: residues 145-158 (EADF…GSIS), 188-198 (SSHKPGSSPSS), and 221-241 (SYAP…SDCS). A coiled-coil region spans residues 271–353 (LQQKEVTVRH…MRSSLADKDK (83 aa)). The tract at residues 310–417 (REDWIEEECH…DTMADGLSLE (108 aa)) is sufficient for interaction with STX1A. Phosphoserine is present on residues S396 and S555. The chain crosses the membrane as a helical span at residues 606-626 (SFLVDLLAVAAPVVPTVLWAF).

As to quaternary structure, interacts with STX1A and KIF5B. In terms of tissue distribution, isoform 3, isoform 4 and isoform 5 are expressed in HeLa cell line (at protein level). Isoform 3 is expressed in fetal and adult brain. Isoform 4 is expressed in numerous fetal tissues (brain, kidney, liver, lung, and thymus) and in adult brain, kidney, liver, lung, pancreas, colon, prostate, small intestine, testis and thymus. Isoform 5 is expressed in fetal brain, brain and small intestine.

It localises to the cytoplasm. Its subcellular location is the cytoskeleton. It is found in the cytoplasmic vesicle. The protein resides in the golgi apparatus membrane. Its function is as follows. Part of a kinesin motor-adapter complex that is critical for the anterograde axonal transport of active zone components and contributes to activity-dependent presynaptic assembly during neuronal development. This chain is Syntabulin (SYBU), found in Homo sapiens (Human).